The chain runs to 184 residues: Protein Syd (184 aa).

Belongs to the Syd family.

The protein resides in the cell inner membrane. Interacts with the SecY protein in vivo. May bind preferentially to an uncomplexed state of SecY, thus functioning either as a chelating agent for excess SecY in the cell or as a regulatory factor that negatively controls the translocase function. In Photorhabdus laumondii subsp. laumondii (strain DSM 15139 / CIP 105565 / TT01) (Photorhabdus luminescens subsp. laumondii), this protein is Protein Syd.